We begin with the raw amino-acid sequence, 299 residues long: tRNA uridine(34) hydroxylase (299 aa).

Positions A132 to Y226 constitute a Rhodanese domain. The active-site Cysteine persulfide intermediate is the C186.

It belongs to the TrhO family.

The enzyme catalyses uridine(34) in tRNA + AH2 + O2 = 5-hydroxyuridine(34) in tRNA + A + H2O. Functionally, catalyzes oxygen-dependent 5-hydroxyuridine (ho5U) modification at position 34 in tRNAs. This is tRNA uridine(34) hydroxylase from Burkholderia pseudomallei (strain 1106a).